A 1877-amino-acid chain; its full sequence is Phosphatidylinositol 4-kinase stt4 (1877 aa).

Residues 1305-1491 (PDSDAASSPI…KPILDRVMDK (187 aa)) enclose the PIK helical domain. Residues 1492–1625 (MINSLSGEDK…EVWQSAIFKV (134 aa)) are pleckstrin homology (PH) domain conferring phosphoinositide binding specificity. Residues 1593 to 1861 (DPEELAVNGT…LIEQSYANKR (269 aa)) enclose the PI3K/PI4K catalytic domain. A G-loop region spans residues 1599-1605 (VNGTEEE). The tract at residues 1728–1736 (QFKDRHNGN) is catalytic loop. Residues 1747–1771 (HIDFGFIFDIAPGGITFESAPFKLT) form an activation loop region.

The protein belongs to the PI3/PI4-kinase family. Type III PI4K subfamily.

It localises to the cytoplasm. The enzyme catalyses a 1,2-diacyl-sn-glycero-3-phospho-(1D-myo-inositol) + ATP = a 1,2-diacyl-sn-glycero-3-phospho-(1D-myo-inositol 4-phosphate) + ADP + H(+). Functionally, acts on phosphatidylinositol (PI) in the first committed step in the production of the second messenger inositol 1,4,5,-trisphosphate. In Schizosaccharomyces pombe (strain 972 / ATCC 24843) (Fission yeast), this protein is Phosphatidylinositol 4-kinase stt4 (stt4).